The sequence spans 1866 residues: Protein strawberry notch homolog (1866 aa).

The segment covering 19 to 28 has biased composition (low complexity); the sequence is QQSSPTPSTS. 5 disordered regions span residues 19 to 63, 132 to 151, 156 to 253, 561 to 581, and 1112 to 1308; these read QQSS…HSSS, TAPT…IVPK, LFET…GLPI, GMAS…QKAK, and GLSG…ARGS. Polar residues-rich tracts occupy residues 37 to 63 and 134 to 146; these read QSFS…HSSS and PTVN…TPTV. Residues 161–176 are compositionally biased toward low complexity; it reads TADSPTPSGDTSTTAS. Composition is skewed to polar residues over residues 191-203 and 210-228; these read DRQN…TARS and TPST…LTQR. Over residues 229–239 the composition is skewed to low complexity; it reads SHTSSPASSAS. A compositionally biased stretch (polar residues) spans 566–577; that stretch reads RLQTTPQPLTKS. The segment covering 1112–1126 has biased composition (low complexity); it reads GLSGIGRSSMSSSTG. Positions 1142 to 1152 are enriched in acidic residues; the sequence is DGSDDEVENDM. The segment covering 1164-1177 has biased composition (basic and acidic residues); sequence ESAREEAEGARTLE. A compositionally biased stretch (acidic residues) spans 1194–1213; the sequence is SSSDDSDEEVVKDEDEDEEA. Composition is skewed to basic and acidic residues over residues 1262–1281 and 1290–1304; these read RDEE…EERR and RRAE…EELQ.

Belongs to the SBNO family. In terms of tissue distribution, expressed in the somatic gonad, neurons, hypodermal cells, seam cells, the excretory system, and intestinal cells (at protein level).

It localises to the nucleus. Its function is as follows. Transcriptional activator that functions upstream of the let-60/Ras and let-23/EGFR signaling pathways to positively regulate lin-3 expression and thereby promote vulval induction. Plays a role in excretory duct development. Plays a role in male tail development. This chain is Protein strawberry notch homolog, found in Caenorhabditis elegans.